The following is a 380-amino-acid chain: Cytochrome b (380 aa).

4 helical membrane passes run 34–54, 78–99, 114–134, and 179–199; these read FGSL…LLAM, WLIR…FLHI, WNTG…GYVL, and FFAL…IHLT. Heme b is bound by residues histidine 84 and histidine 98. Heme b is bound by residues histidine 183 and histidine 197. Histidine 202 is an a ubiquinone binding site. 4 helical membrane-spanning segments follow: residues 227–247, 289–309, 321–341, and 348–368; these read LKDI…ALFS, LGGV…PFLH, LSQI…WIGS, and FIII…ILFP.

This sequence belongs to the cytochrome b family. As to quaternary structure, the cytochrome bc1 complex contains 11 subunits: 3 respiratory subunits (MT-CYB, CYC1 and UQCRFS1), 2 core proteins (UQCRC1 and UQCRC2) and 6 low-molecular weight proteins (UQCRH/QCR6, UQCRB/QCR7, UQCRQ/QCR8, UQCR10/QCR9, UQCR11/QCR10 and a cleavage product of UQCRFS1). This cytochrome bc1 complex then forms a dimer. The cofactor is heme b.

It localises to the mitochondrion inner membrane. In terms of biological role, component of the ubiquinol-cytochrome c reductase complex (complex III or cytochrome b-c1 complex) that is part of the mitochondrial respiratory chain. The b-c1 complex mediates electron transfer from ubiquinol to cytochrome c. Contributes to the generation of a proton gradient across the mitochondrial membrane that is then used for ATP synthesis. The polypeptide is Cytochrome b (MT-CYB) (Polyplectron bicalcaratum (Grey peacock-pheasant)).